The primary structure comprises 199 residues: Pneumococcal vaccine antigen A homolog (199 aa).

It localises to the cell surface. The chain is Pneumococcal vaccine antigen A homolog (pvaA) from Streptococcus pyogenes serotype M6 (strain ATCC BAA-946 / MGAS10394).